The chain runs to 366 residues: Protein sigma-NS (366 aa).

Residues Met1–Lys11 are important for ssRNA-binding and formation of complexes.

This sequence belongs to the orthoreovirus sigma-NS protein family. In terms of assembly, homooligomer; in presence of RNA. Interacts with protein mu-NS; this interaction allows the localization of sigma-NS to the viral factories. Interacts with host G3BP1 (via C-terminus); this interaction induces the relocalization of G3BP1 and other SG proteins to the viral factories periphery.

It is found in the host cytoplasm. In terms of biological role, protein that binds to ssRNA and participates with protein mu-NS in forming the matrix of viral factories, which are large inclusions in the host cytoplasm where replication intermediates are assembled and viral RNA replication takes place. Plays a role in the inhibition of the integrated stress response (ISR) to escape from host cell translational shutoff. Participates in the disruption of stress granules (SG) through its association with host G3BP1 and mu-NS. The protein is Protein sigma-NS (S3) of Mammalia (T2J).